We begin with the raw amino-acid sequence, 159 residues long: 6,7-dimethyl-8-ribityllumazine synthase (159 aa).

5-amino-6-(D-ribitylamino)uracil-binding positions include Phe23, 58–60, and 82–84; these read AYE and TII. Residue His90 is the Proton donor of the active site. Leu115 is a 5-amino-6-(D-ribitylamino)uracil binding site. Arg129 contacts (2S)-2-hydroxy-3-oxobutyl phosphate.

Belongs to the DMRL synthase family. Forms an icosahedral capsid composed of 60 subunits, arranged as a dodecamer of pentamers.

It carries out the reaction (2S)-2-hydroxy-3-oxobutyl phosphate + 5-amino-6-(D-ribitylamino)uracil = 6,7-dimethyl-8-(1-D-ribityl)lumazine + phosphate + 2 H2O + H(+). It functions in the pathway cofactor biosynthesis; riboflavin biosynthesis; riboflavin from 2-hydroxy-3-oxobutyl phosphate and 5-amino-6-(D-ribitylamino)uracil: step 1/2. In terms of biological role, catalyzes the formation of 6,7-dimethyl-8-ribityllumazine by condensation of 5-amino-6-(D-ribitylamino)uracil with 3,4-dihydroxy-2-butanone 4-phosphate. This is the penultimate step in the biosynthesis of riboflavin. This chain is 6,7-dimethyl-8-ribityllumazine synthase, found in Blochmanniella floridana.